The primary structure comprises 173 residues: Galactose-6-phosphate isomerase subunit LacB (173 aa).

The protein belongs to the LacAB/RpiB family. In terms of assembly, heteromultimeric protein consisting of LacA and LacB.

It catalyses the reaction aldehydo-D-galactose 6-phosphate = keto-D-tagatose 6-phosphate. Its pathway is carbohydrate metabolism; D-galactose 6-phosphate degradation; D-tagatose 6-phosphate from D-galactose 6-phosphate: step 1/1. The chain is Galactose-6-phosphate isomerase subunit LacB from Clostridium acetobutylicum (strain ATCC 824 / DSM 792 / JCM 1419 / IAM 19013 / LMG 5710 / NBRC 13948 / NRRL B-527 / VKM B-1787 / 2291 / W).